A 387-amino-acid chain; its full sequence is 3-ketoacyl-CoA thiolase (387 aa).

Catalysis depends on Cys91, which acts as the Acyl-thioester intermediate. Active-site proton acceptor residues include His343 and Cys373.

Belongs to the thiolase-like superfamily. Thiolase family. Heterotetramer of two alpha chains (FadB) and two beta chains (FadA).

It localises to the cytoplasm. It carries out the reaction an acyl-CoA + acetyl-CoA = a 3-oxoacyl-CoA + CoA. The protein operates within lipid metabolism; fatty acid beta-oxidation. Catalyzes the final step of fatty acid oxidation in which acetyl-CoA is released and the CoA ester of a fatty acid two carbons shorter is formed. The sequence is that of 3-ketoacyl-CoA thiolase from Shewanella baltica (strain OS185).